The chain runs to 48 residues: Small, acid-soluble spore protein G (48 aa).

A compositionally biased stretch (basic and acidic residues) spans 1–16; the sequence is MSENRHENEENRRDAA. The tract at residues 1-48 is disordered; sequence MSENRHENEENRRDAAVAKVQNSGNAKVVVSVNTDQDQAQAQSQDGED. The segment covering 35–48 has biased composition (low complexity); the sequence is DQDQAQAQSQDGED.

The chain is Small, acid-soluble spore protein G (sspG) from Bacillus subtilis (strain 168).